Reading from the N-terminus, the 171-residue chain is Ribosome maturation factor RimM (171 aa).

Positions 97 to 169 constitute a PRC barrel domain; it reads DGEFYYHEII…RVDVDIMEGL (73 aa).

Belongs to the RimM family. In terms of assembly, binds ribosomal protein uS19.

It localises to the cytoplasm. An accessory protein needed during the final step in the assembly of 30S ribosomal subunit, possibly for assembly of the head region. Essential for efficient processing of 16S rRNA. May be needed both before and after RbfA during the maturation of 16S rRNA. It has affinity for free ribosomal 30S subunits but not for 70S ribosomes. This is Ribosome maturation factor RimM from Lactococcus lactis subsp. cremoris (strain MG1363).